Here is a 940-residue protein sequence, read N- to C-terminus: Isoleucine--tRNA ligase (940 aa).

The 'HIGH' region signature appears at 58 to 68 (PYANGNIHIGH). Glutamate 563 provides a ligand contact to L-isoleucyl-5'-AMP. Positions 604–608 (KMSKS) match the 'KMSKS' region motif. Position 607 (lysine 607) interacts with ATP. Residues cysteine 903, cysteine 906, cysteine 923, and cysteine 926 each coordinate Zn(2+).

This sequence belongs to the class-I aminoacyl-tRNA synthetase family. IleS type 1 subfamily. As to quaternary structure, monomer. It depends on Zn(2+) as a cofactor.

The protein localises to the cytoplasm. It catalyses the reaction tRNA(Ile) + L-isoleucine + ATP = L-isoleucyl-tRNA(Ile) + AMP + diphosphate. Its function is as follows. Catalyzes the attachment of isoleucine to tRNA(Ile). As IleRS can inadvertently accommodate and process structurally similar amino acids such as valine, to avoid such errors it has two additional distinct tRNA(Ile)-dependent editing activities. One activity is designated as 'pretransfer' editing and involves the hydrolysis of activated Val-AMP. The other activity is designated 'posttransfer' editing and involves deacylation of mischarged Val-tRNA(Ile). This is Isoleucine--tRNA ligase from Buchnera aphidicola subsp. Acyrthosiphon pisum (strain 5A).